Reading from the N-terminus, the 317-residue chain is HTH-type transcriptional repressor PA14_22550 (317 aa).

The HTH lysR-type domain maps to 1 to 59 (MDKLTAMATFVKVVDAGSFTRAADALGLPKARVSQRVSDLEKHLGVRLLNRTTRALSLT). The segment at residues 19-38 (FTRAADALGLPKARVSQRVS) is a DNA-binding region (H-T-H motif).

This sequence belongs to the LysR transcriptional regulatory family.

In terms of biological role, represses the transcription of the operon that consists of PA14_22510 to PA14_22540. In Pseudomonas aeruginosa (strain UCBPP-PA14), this protein is HTH-type transcriptional repressor PA14_22550.